Consider the following 267-residue polypeptide: L-aspartate dehydrogenase 2 (267 aa).

NAD(+) is bound by residues alanine 123 and asparagine 189. Histidine 219 is an active-site residue.

It belongs to the L-aspartate dehydrogenase family.

The enzyme catalyses L-aspartate + NADP(+) + H2O = oxaloacetate + NH4(+) + NADPH + H(+). It catalyses the reaction L-aspartate + NAD(+) + H2O = oxaloacetate + NH4(+) + NADH + H(+). It participates in cofactor biosynthesis; NAD(+) biosynthesis; iminoaspartate from L-aspartate (dehydrogenase route): step 1/1. Functionally, specifically catalyzes the NAD or NADP-dependent dehydrogenation of L-aspartate to iminoaspartate. This Bordetella bronchiseptica (strain ATCC BAA-588 / NCTC 13252 / RB50) (Alcaligenes bronchisepticus) protein is L-aspartate dehydrogenase 2.